A 103-amino-acid polypeptide reads, in one-letter code: Phosphoribosyl-ATP pyrophosphatase (103 aa).

It belongs to the PRA-PH family.

It is found in the cytoplasm. The catalysed reaction is 1-(5-phospho-beta-D-ribosyl)-ATP + H2O = 1-(5-phospho-beta-D-ribosyl)-5'-AMP + diphosphate + H(+). The protein operates within amino-acid biosynthesis; L-histidine biosynthesis; L-histidine from 5-phospho-alpha-D-ribose 1-diphosphate: step 2/9. This is Phosphoribosyl-ATP pyrophosphatase from Cereibacter sphaeroides (strain KD131 / KCTC 12085) (Rhodobacter sphaeroides).